Here is a 686-residue protein sequence, read N- to C-terminus: U-box domain-containing protein 19 (686 aa).

The U-box domain maps to 277-351; sequence LNVDDLRCPI…QSYSKQNGVV (75 aa). ARM repeat units lie at residues 406 to 445, 448 to 489, 491 to 533, 536 to 577, and 579 to 620; these read TFYRSCLVEAGVVESLMKILRSDDPRIQENAMAGIMNLSK, AGKT…YLSS, GDYS…SLLM, PDNH…KMAE, and PDGM…NLCH.

It carries out the reaction S-ubiquitinyl-[E2 ubiquitin-conjugating enzyme]-L-cysteine + [acceptor protein]-L-lysine = [E2 ubiquitin-conjugating enzyme]-L-cysteine + N(6)-ubiquitinyl-[acceptor protein]-L-lysine.. Its pathway is protein modification; protein ubiquitination. Its function is as follows. Functions as an E3 ubiquitin ligase. This Arabidopsis thaliana (Mouse-ear cress) protein is U-box domain-containing protein 19 (PUB19).